The sequence spans 346 residues: Phenylalanine--tRNA ligase alpha subunit (346 aa).

A Mg(2+)-binding site is contributed by glutamate 258.

This sequence belongs to the class-II aminoacyl-tRNA synthetase family. Phe-tRNA synthetase alpha subunit type 1 subfamily. Tetramer of two alpha and two beta subunits. Requires Mg(2+) as cofactor.

It is found in the cytoplasm. The enzyme catalyses tRNA(Phe) + L-phenylalanine + ATP = L-phenylalanyl-tRNA(Phe) + AMP + diphosphate + H(+). The sequence is that of Phenylalanine--tRNA ligase alpha subunit from Protochlamydia amoebophila (strain UWE25).